The following is a 262-amino-acid chain: NADPH-dependent 7-cyano-7-deazaguanine reductase (262 aa).

A substrate-binding site is contributed by 69–71; that stretch reads IES. 71 to 72 is an NADPH binding site; it reads SK. Residue Cys170 is the Thioimide intermediate of the active site. Asp177 functions as the Proton donor in the catalytic mechanism. Residue 209–210 coordinates substrate; it reads HE. An NADPH-binding site is contributed by 238 to 239; sequence RG.

This sequence belongs to the GTP cyclohydrolase I family. QueF type 2 subfamily. Homodimer.

It is found in the cytoplasm. The catalysed reaction is 7-aminomethyl-7-carbaguanine + 2 NADP(+) = 7-cyano-7-deazaguanine + 2 NADPH + 3 H(+). Its pathway is tRNA modification; tRNA-queuosine biosynthesis. Functionally, catalyzes the NADPH-dependent reduction of 7-cyano-7-deazaguanine (preQ0) to 7-aminomethyl-7-deazaguanine (preQ1). The protein is NADPH-dependent 7-cyano-7-deazaguanine reductase of Buchnera aphidicola subsp. Schizaphis graminum (strain Sg).